A 527-amino-acid chain; its full sequence is MYTPANNHNRSLAMSTQPTPAAARHCKVAIIGTGFSGLGMAIRLRQEGEDDFLIFEKDAGVGGTWRVNNYPGCACDVQSHVYSFSFEANPEWTRMFARQPEIRAYLEKCWEKYRLQEKTLLNTEIGKLAWDERQSLWHLHDAQGNHYTANAVVSGMGGLSTPAYPRLDGLENFQGKVFHSQQWDHDYDLKGKRVAVIGTGASAIQFVPEIQPLVAALDLYQRTPPWILPKPDRAISETERRRFRRFPLVQKLWRGGLYSLLEGRVLGFTFAPQVMKLVQRLAIRHIHKQIKDPELRRKVTPDYTIGCKRILMSHNYYPALAAANSTVITEGIRAVTANGIVDGNGREREVDAIIFGTGFTANDPIPRGVVFGRDGRDLLDSWSKGPEAYKGTTTAGFPNLFFLMGPNTGLGHNSMVYMIESQIAYVLDALKLMKRRELLSLEVKAPVQERYNEYLQRKLDRSVWSVGGCKSWYLHPVSGRNCTLWPGFTWRFRALTRQFDASAYHLTTTPLAALSNEARQQAEGVPA.

FAD contacts are provided by residues serine 36, glutamate 56, 64-67 (TWRV), aspartate 76, tyrosine 82, and isoleucine 125. NADP(+) is bound at residue 74–76 (ACD). Residues 199–205 (TGASAIQ), 222–223 (RT), and 308–309 (KR) each bind NADP(+). Methionine 415 serves as a coordination point for FAD.

Belongs to the FAD-binding monooxygenase family. FAD is required as a cofactor.

Functionally, catalyzes a Baeyer-Villiger oxidation reaction, i.e. the insertion of an oxygen atom into a carbon-carbon bond adjacent to a carbonyl, which converts ketones to esters or lactones using NADPH and/or NADH as an electron donor. Thus, can convert bicyclo[3.2.0]hept-2-en-6-one into the oxidative lactone products 2-oxabicyclo[3.3.0]oct-6-en-3-one and 3-oxabicyclo[3.3.0]oct-6-en-2-one. Is also able to catalyze the sulfoxidation of methyl phenyl sulfide (thioanisole). This Pseudomonas aeruginosa (strain ATCC 15692 / DSM 22644 / CIP 104116 / JCM 14847 / LMG 12228 / 1C / PRS 101 / PAO1) protein is Baeyer-Villiger monooxygenase.